Reading from the N-terminus, the 381-residue chain is Alkanesulfonate monooxygenase (381 aa).

The protein belongs to the SsuD family. Homotetramer.

It carries out the reaction an alkanesulfonate + FMNH2 + O2 = an aldehyde + FMN + sulfite + H2O + 2 H(+). Catalyzes the desulfonation of aliphatic sulfonates. The polypeptide is Alkanesulfonate monooxygenase (Shigella flexneri).